Consider the following 132-residue polypeptide: D-ribose pyranase (132 aa).

H20 acts as the Proton donor in catalysis. Substrate is bound by residues D28, H99, and 121–123 (YSN).

The protein belongs to the RbsD / FucU family. RbsD subfamily. As to quaternary structure, homodecamer.

The protein localises to the cytoplasm. The enzyme catalyses beta-D-ribopyranose = beta-D-ribofuranose. It participates in carbohydrate metabolism; D-ribose degradation; D-ribose 5-phosphate from beta-D-ribopyranose: step 1/2. Catalyzes the interconversion of beta-pyran and beta-furan forms of D-ribose. This chain is D-ribose pyranase, found in Lactococcus lactis subsp. cremoris (strain SK11).